The chain runs to 273 residues: 3-methyl-2-oxobutanoate hydroxymethyltransferase (273 aa).

Residues Asp53 and Asp92 each contribute to the Mg(2+) site. Residues Asp53–Ser54, Asp92, and Lys120 contribute to the 3-methyl-2-oxobutanoate site. Glu122 provides a ligand contact to Mg(2+). The active-site Proton acceptor is Glu189.

It belongs to the PanB family. As to quaternary structure, homodecamer; pentamer of dimers. It depends on Mg(2+) as a cofactor.

Its subcellular location is the cytoplasm. It catalyses the reaction 3-methyl-2-oxobutanoate + (6R)-5,10-methylene-5,6,7,8-tetrahydrofolate + H2O = 2-dehydropantoate + (6S)-5,6,7,8-tetrahydrofolate. The protein operates within cofactor biosynthesis; (R)-pantothenate biosynthesis; (R)-pantoate from 3-methyl-2-oxobutanoate: step 1/2. Its function is as follows. Catalyzes the reversible reaction in which hydroxymethyl group from 5,10-methylenetetrahydrofolate is transferred onto alpha-ketoisovalerate to form ketopantoate. The chain is 3-methyl-2-oxobutanoate hydroxymethyltransferase from Cupriavidus pinatubonensis (strain JMP 134 / LMG 1197) (Cupriavidus necator (strain JMP 134)).